The following is a 72-amino-acid chain: UPF0495 protein KLLA0D04334g (72 aa).

A helical transmembrane segment spans residues 20-42 (PVELTPLFLAMGVALASGTWFSY).

It belongs to the UPF0495 family.

Its subcellular location is the membrane. The protein is UPF0495 protein KLLA0D04334g of Kluyveromyces lactis (strain ATCC 8585 / CBS 2359 / DSM 70799 / NBRC 1267 / NRRL Y-1140 / WM37) (Yeast).